A 1078-amino-acid chain; its full sequence is Lon protease homolog, mitochondrial (1078 aa).

The N-terminal 27 residues, 1 to 27 (MIKASKCNKPRALFLVRVSIPRTFIRN), are a transit peptide targeting the mitochondrion. Over residues 71–123 (SEKEKQPSTDKSNDKDKPSRKEKGKDKEKENEEKKDINMDEKYEINEETDTKP) the composition is skewed to basic and acidic residues. Positions 71–179 (SEKEKQPSTD…KEFLSPSDSG (109 aa)) are disordered. The segment covering 127–157 (PNNPVSSKSNISSSSGGDNNNNNNNNNNNND) has biased composition (low complexity). The span at 158-172 (SDGKNDDGSPKDKEF) shows a compositional bias: basic and acidic residues. The 219-residue stretch at 182-400 (PPFLAIAMKD…LSLQLLQVEA (219 aa)) folds into the Lon N-terminal domain. Residue 548–555 (GPPGTGKT) coordinates ATP. Residues 792 to 825 (NSPIEYIQSNTEVKAETTTESQQEQEKEKEKDEE) form a disordered region. Residues 815-825 (EQEKEKEKDEE) show a composition bias toward basic and acidic residues. The 189-residue stretch at 861 to 1049 (TLNPGVATGL…SEVFEHLFQG (189 aa)) folds into the Lon proteolytic domain. Residues S955 and K998 contribute to the active site.

It belongs to the peptidase S16 family. As to quaternary structure, homohexamer or homoheptamer. Organized in a ring with a central cavity.

The protein resides in the mitochondrion matrix. It carries out the reaction Hydrolysis of proteins in presence of ATP.. Functionally, ATP-dependent serine protease that mediates the selective degradation of misfolded, unassembled or oxidatively damaged polypeptides as well as certain short-lived regulatory proteins in the mitochondrial matrix. May also have a chaperone function in the assembly of inner membrane protein complexes. Participates in the regulation of mitochondrial gene expression and in the maintenance of the integrity of the mitochondrial genome. Binds to mitochondrial DNA in a site-specific manner. This Candida albicans (strain SC5314 / ATCC MYA-2876) (Yeast) protein is Lon protease homolog, mitochondrial.